Consider the following 531-residue polypeptide: Bifunctional protein TrpGD (531 aa).

The Glutamine amidotransferase type-1 domain maps to 3–196; that stretch reads DILLLDNIDS…LAWAQQKLEP (194 aa). L-glutamine is bound at residue 57–59; the sequence is GPG. Cys84 functions as the Nucleophile; for GATase activity in the catalytic mechanism. L-glutamine-binding positions include Gln88 and 134–135; that span reads SL. Active-site for GATase activity residues include His170 and Glu172. An anthranilate phosphoribosyltransferase region spans residues 202 to 531; that stretch reads PILEKLYQAQ…DRVTALAARG (330 aa).

In the C-terminal section; belongs to the anthranilate phosphoribosyltransferase family. In terms of assembly, heterotetramer consisting of two non-identical subunits: a beta subunit (TrpG) and a large alpha subunit (TrpE).

The enzyme catalyses chorismate + L-glutamine = anthranilate + pyruvate + L-glutamate + H(+). The catalysed reaction is N-(5-phospho-beta-D-ribosyl)anthranilate + diphosphate = 5-phospho-alpha-D-ribose 1-diphosphate + anthranilate. Its pathway is amino-acid biosynthesis; L-tryptophan biosynthesis; L-tryptophan from chorismate: step 1/5. The protein operates within amino-acid biosynthesis; L-tryptophan biosynthesis; L-tryptophan from chorismate: step 2/5. Its activity is regulated as follows. Cooperatively feedback inhibited by tryptophan. In terms of biological role, part of a heterotetrameric complex that catalyzes the two-step biosynthesis of anthranilate, an intermediate in the biosynthesis of L-tryptophan. In the first step, the glutamine-binding beta subunit (TrpG) of anthranilate synthase (AS) provides the glutamine amidotransferase activity which generates ammonia as a substrate that, along with chorismate, is used in the second step, catalyzed by the large alpha subunit of AS (TrpE) to produce anthranilate. In the absence of TrpG, TrpE can synthesize anthranilate directly from chorismate and high concentrations of ammonia. In addition to synthesizing anthranilate, it also catalyzes the second step of the pathway, the transfer of the phosphoribosyl group of 5-phosphorylribose-1-pyrophosphate (PRPP) to anthranilate. This is Bifunctional protein TrpGD (trpGD) from Escherichia coli (strain K12).